The chain runs to 246 residues: 3-deoxy-manno-octulosonate cytidylyltransferase (246 aa).

It belongs to the KdsB family.

It is found in the cytoplasm. The catalysed reaction is 3-deoxy-alpha-D-manno-oct-2-ulosonate + CTP = CMP-3-deoxy-beta-D-manno-octulosonate + diphosphate. Its pathway is nucleotide-sugar biosynthesis; CMP-3-deoxy-D-manno-octulosonate biosynthesis; CMP-3-deoxy-D-manno-octulosonate from 3-deoxy-D-manno-octulosonate and CTP: step 1/1. It functions in the pathway bacterial outer membrane biogenesis; lipopolysaccharide biosynthesis. In terms of biological role, activates KDO (a required 8-carbon sugar) for incorporation into bacterial lipopolysaccharide in Gram-negative bacteria. This chain is 3-deoxy-manno-octulosonate cytidylyltransferase, found in Bradyrhizobium sp. (strain ORS 278).